A 639-amino-acid chain; its full sequence is CREB3 regulatory factor (639 aa).

Residues 302–422 (PLPQEGPGSL…SVEDLKEVTS (121 aa)) form a disordered region. The segment covering 310 to 328 (SLAAGESSSLSASTSVSDS) has biased composition (low complexity). A compositionally biased stretch (polar residues) spans 339-351 (LFVSDNLGEQPTK). A compositionally biased stretch (acidic residues) spans 355–370 (EEDEEDEEDVDDEDHD). A compositionally biased stretch (basic and acidic residues) spans 371–380 (EGFGSEHELS). Residues 381-401 (ENEEEEEEEEDYEDDKDDDIS) are compositionally biased toward acidic residues. In terms of domain architecture, bZIP spans 521 to 584 (TARPRSRKEK…VNRVQNPRDE (64 aa)). The segment at 523-532 (RPRSRKEKNK) is basic motif. Residues 533–540 (LASRACRL) are leucine-zipper.

Belongs to the bZIP family. CREBRF subfamily. Interacts (via leucine-zipper domain) with CREB3 (via leucine-zipper domain); the interaction promotes CREB3 degradation. In terms of processing, probably degraded by the proteasome.

It localises to the nucleus. In terms of biological role, acts as a negative regulator of the endoplasmic reticulum stress response or unfolded protein response (UPR). Represses the transcriptional activity of CREB3 during the UPR. Recruits CREB3 into nuclear foci. The chain is CREB3 regulatory factor (CREBRF) from Homo sapiens (Human).